The sequence spans 178 residues: Nicotinamide-nucleotide adenylyltransferase (178 aa).

It belongs to the archaeal NMN adenylyltransferase family.

Its subcellular location is the cytoplasm. It catalyses the reaction beta-nicotinamide D-ribonucleotide + ATP + H(+) = diphosphate + NAD(+). It participates in cofactor biosynthesis; NAD(+) biosynthesis; NAD(+) from nicotinamide D-ribonucleotide: step 1/1. This chain is Nicotinamide-nucleotide adenylyltransferase, found in Pyrobaculum aerophilum (strain ATCC 51768 / DSM 7523 / JCM 9630 / CIP 104966 / NBRC 100827 / IM2).